The following is a 224-amino-acid chain: Metalloproteinase inhibitor 4 (224 aa).

The N-terminal stretch at 1 to 29 (MPWSPLAALSWALVLRLLALLWPPGRGEA) is a signal peptide. Zn(2+) is bound at residue Cys-30. 2 involved in metalloproteinase-binding regions span residues 30–33 (CSCA) and 99–100 (SS). Intrachain disulfides connect Cys-30–Cys-102, Cys-32–Cys-131, Cys-42–Cys-156, Cys-158–Cys-205, Cys-163–Cys-168, and Cys-176–Cys-197. Positions 30–156 (CSCAPAHPQQ…SLNHHYHQNC (127 aa)) constitute an NTR domain.

Belongs to the protease inhibitor I35 (TIMP) family. As to expression, expressed in retina, smooth muscle, skin, pancreas, skeletal muscle, heart, brain, lung, kidney and testis. Not found in cartilage, spleen and liver.

The protein localises to the secreted. Its function is as follows. Complexes with metalloproteinases (such as collagenases) and irreversibly inactivates them by binding to their catalytic zinc cofactor. The sequence is that of Metalloproteinase inhibitor 4 (Timp4) from Rattus norvegicus (Rat).